The chain runs to 569 residues: Melanophilin (569 aa).

A RabBD domain is found at 4–124 (KLDLSKLTDD…MGSLEWYYGH (121 aa)). An FYVE-type zinc finger spans residues 58–112 (HLNETHCARCLQPYRLLVAPKRQCLDCHLFTCQDCSHAHPEEEGWLCDPCHLARV). The disordered stretch occupies residues 143–430 (GRLQGGGGPE…MQPGRTTDQE (288 aa)). Composition is skewed to basic and acidic residues over residues 352 to 362 (ETLKRKLEEMT) and 379 to 390 (EEEAGLNRKTSI). Polar residues predominate over residues 404–415 (SGQTSRQETSPR). A coiled-coil region spans residues 431–465 (LLELEDRVAVTASEVQQVESEVSNIKSKIAALQAA). The tract at residues 490–569 (GRLGQTPKDP…FAKPVMTQRP (80 aa)) is disordered. The segment covering 526–535 (SQDKAGDSFD) has biased composition (basic and acidic residues).

As to quaternary structure, binds RAB27A that has been activated by GTP-binding via its N-terminus. Binds MYO5A via its C-terminal coiled coil domain.

Its subcellular location is the melanosome. Rab effector protein involved in melanosome transport. Serves as link between melanosome-bound RAB27A and the motor protein MYO5A. The sequence is that of Melanophilin (MLPH) from Felis catus (Cat).